The primary structure comprises 160 residues: NADH-quinone oxidoreductase subunit B (160 aa).

C37, C38, C102, and C132 together coordinate [4Fe-4S] cluster.

It belongs to the complex I 20 kDa subunit family. In terms of assembly, NDH-1 is composed of 14 different subunits. Subunits NuoB, C, D, E, F, and G constitute the peripheral sector of the complex. Requires [4Fe-4S] cluster as cofactor.

Its subcellular location is the cell inner membrane. The enzyme catalyses a quinone + NADH + 5 H(+)(in) = a quinol + NAD(+) + 4 H(+)(out). Its function is as follows. NDH-1 shuttles electrons from NADH, via FMN and iron-sulfur (Fe-S) centers, to quinones in the respiratory chain. Couples the redox reaction to proton translocation (for every two electrons transferred, four hydrogen ions are translocated across the cytoplasmic membrane), and thus conserves the redox energy in a proton gradient. The sequence is that of NADH-quinone oxidoreductase subunit B from Neisseria meningitidis serogroup A / serotype 4A (strain DSM 15465 / Z2491).